The primary structure comprises 659 residues: 3-hydroxypropionyl-coenzyme A synthetase (659 aa).

Asp525 is an active-site residue. Lys616 carries the post-translational modification N6-acetyllysine.

This sequence belongs to the ATP-dependent AMP-binding enzyme family.

It catalyses the reaction 3-hydroxypropanoate + ATP + CoA = 3-hydroxypropanoyl-CoA + AMP + diphosphate. Plays a role in the autotrophic CO(2) fixation pathway. Activates 3-hydroxypropionate to its CoA ester. Can also activate propionate, and to a lesser extent acrylate, acetate and butyrate. The polypeptide is 3-hydroxypropionyl-coenzyme A synthetase (Sulfurisphaera tokodaii (strain DSM 16993 / JCM 10545 / NBRC 100140 / 7) (Sulfolobus tokodaii)).